We begin with the raw amino-acid sequence, 122 residues long: Proteasome assembly chaperone 3 (122 aa).

Position 1 is an N-acetylmethionine (Met1).

The protein belongs to the PSMG3 family. Homodimer. Interacts directly with alpha and beta subunits of the 20S proteasome but dissociates before the formation of half-proteasomes, probably upon recruitment of POMP. Interacts with PSMG4.

In terms of biological role, chaperone protein which promotes assembly of the 20S proteasome. May cooperate with PSMG1-PSMG2 heterodimers to orchestrate the correct assembly of proteasomes. This chain is Proteasome assembly chaperone 3 (Psmg3), found in Mus musculus (Mouse).